We begin with the raw amino-acid sequence, 394 residues long: 1-deoxy-D-xylulose 5-phosphate reductoisomerase (394 aa).

7 residues coordinate NADPH: T12, G13, S14, I15, K39, Q40, and N126. Residue K127 coordinates 1-deoxy-D-xylulose 5-phosphate. E128 serves as a coordination point for NADPH. D152 serves as a coordination point for Mn(2+). S153, E154, S183, and H206 together coordinate 1-deoxy-D-xylulose 5-phosphate. E154 serves as a coordination point for Mn(2+). G212 contributes to the NADPH binding site. Residues S219, N224, K225, and E228 each contribute to the 1-deoxy-D-xylulose 5-phosphate site. Mn(2+) is bound at residue E228.

It belongs to the DXR family. The cofactor is Mg(2+). It depends on Mn(2+) as a cofactor.

It carries out the reaction 2-C-methyl-D-erythritol 4-phosphate + NADP(+) = 1-deoxy-D-xylulose 5-phosphate + NADPH + H(+). The protein operates within isoprenoid biosynthesis; isopentenyl diphosphate biosynthesis via DXP pathway; isopentenyl diphosphate from 1-deoxy-D-xylulose 5-phosphate: step 1/6. Its function is as follows. Catalyzes the NADPH-dependent rearrangement and reduction of 1-deoxy-D-xylulose-5-phosphate (DXP) to 2-C-methyl-D-erythritol 4-phosphate (MEP). This is 1-deoxy-D-xylulose 5-phosphate reductoisomerase from Neisseria gonorrhoeae (strain ATCC 700825 / FA 1090).